The chain runs to 181 residues: Inner membrane-spanning protein YciB (181 aa).

The next 5 helical transmembrane spans lie at 10–30 (LIIF…GALI), 50–70 (MQLI…ALHD), 80–100 (IVYV…KPAI), 120–140 (WAWV…AYHL), and 148–168 (FKVF…GGYI).

This sequence belongs to the YciB family.

It is found in the cell inner membrane. Functionally, plays a role in cell envelope biogenesis, maintenance of cell envelope integrity and membrane homeostasis. The polypeptide is Inner membrane-spanning protein YciB (Vibrio cholerae serotype O1 (strain ATCC 39315 / El Tor Inaba N16961)).